Consider the following 412-residue polypeptide: Putative competence-damage inducible protein (412 aa).

This sequence belongs to the CinA family.

In Caldanaerobacter subterraneus subsp. tengcongensis (strain DSM 15242 / JCM 11007 / NBRC 100824 / MB4) (Thermoanaerobacter tengcongensis), this protein is Putative competence-damage inducible protein.